The chain runs to 1079 residues: Tudor domain-containing protein 7 (1079 aa).

In terms of domain architecture, HTH OST-type 1 spans 1–69; that stretch reads MLRAVLQANK…EVTCYAVACK (69 aa). Positions 109–132 are disordered; it reads KPKITLRQPGFTPPQEMMIRKPVP. HTH OST-type domains follow at residues 218–288 and 330–398; these read DLPV…YATT and PKDE…YGKS. 2 Tudor domains span residues 494-551 and 684-741; these read PLRV…FYTL and LPFC…LLRD.

It belongs to the TDRD7 family.

The protein resides in the cytoplasm. Its function is as follows. Component of specific cytoplasmic RNA granules involved in post-transcriptional regulation of specific genes: probably acts by binding to specific mRNAs and regulating their translation. Probably required during spermatogenesis. This is Tudor domain-containing protein 7 (tdrd7) from Xenopus laevis (African clawed frog).